A 329-amino-acid polypeptide reads, in one-letter code: Ribosome biogenesis regulatory protein homolog (329 aa).

Disordered stretches follow at residues 227–248 and 262–329; these read KANI…VSAE and KKAK…NKRK. The span at 278–295 shows a compositional bias: basic and acidic residues; it reads LREKKEKQEKKGAKEATR. Basic residues predominate over residues 320-329; that stretch reads AKKKGANKRK.

Belongs to the RRS1 family.

Its subcellular location is the nucleus. It is found in the nucleolus. Functionally, involved in ribosomal large subunit assembly. This is Ribosome biogenesis regulatory protein homolog from Caenorhabditis briggsae.